Consider the following 358-residue polypeptide: Alanine racemase (358 aa).

Lys35 serves as the catalytic Proton acceptor; specific for D-alanine. An N6-(pyridoxal phosphate)lysine modification is found at Lys35. Arg130 contributes to the substrate binding site. The active-site Proton acceptor; specific for L-alanine is Tyr255. Met303 lines the substrate pocket.

The protein belongs to the alanine racemase family. Requires pyridoxal 5'-phosphate as cofactor.

The catalysed reaction is L-alanine = D-alanine. It participates in amino-acid biosynthesis; D-alanine biosynthesis; D-alanine from L-alanine: step 1/1. Its function is as follows. Catalyzes the interconversion of L-alanine and D-alanine. May also act on other amino acids. The sequence is that of Alanine racemase (alr) from Shewanella putrefaciens (strain CN-32 / ATCC BAA-453).